The primary structure comprises 288 residues: 4-hydroxybenzoate octaprenyltransferase (288 aa).

The next 8 helical transmembrane spans lie at 23-43, 46-66, 98-118, 141-161, 163-183, 213-233, 234-254, and 268-288; these read IGSL…GRGI, AKIL…GCVV, ILFV…NSMT, LPQV…FAAV, ESLP…TVAY, LIIG…GWLM, NLGG…THQQ, and AFLN…ISYW.

The protein belongs to the UbiA prenyltransferase family. Mg(2+) is required as a cofactor.

It localises to the cell inner membrane. The enzyme catalyses all-trans-octaprenyl diphosphate + 4-hydroxybenzoate = 4-hydroxy-3-(all-trans-octaprenyl)benzoate + diphosphate. The protein operates within cofactor biosynthesis; ubiquinone biosynthesis. Catalyzes the prenylation of para-hydroxybenzoate (PHB) with an all-trans polyprenyl group. Mediates the second step in the final reaction sequence of ubiquinone-8 (UQ-8) biosynthesis, which is the condensation of the polyisoprenoid side chain with PHB, generating the first membrane-bound Q intermediate 3-octaprenyl-4-hydroxybenzoate. This Yersinia pseudotuberculosis serotype O:1b (strain IP 31758) protein is 4-hydroxybenzoate octaprenyltransferase.